The primary structure comprises 160 residues: MKGGAGVPDLPSLDASGVRLAIVASSWHGKICDALLDGARKVAAGCGLDDPTVVRVLGAIEIPVVAQELARNHDAVVALGVVIRGQTPHFDYVCDAVTQGLTRVSLDSSTPIANGVLTTNTEEQALDRAGLPTSAEDKGAQATVAALATALTLRELRAHS.

5-amino-6-(D-ribitylamino)uracil is bound by residues Trp27, 59-61 (AIE), and 81-83 (VVI). 86-87 (QT) contacts (2S)-2-hydroxy-3-oxobutyl phosphate. The active-site Proton donor is the His89. Asn114 provides a ligand contact to 5-amino-6-(D-ribitylamino)uracil. Arg128 is a binding site for (2S)-2-hydroxy-3-oxobutyl phosphate.

It belongs to the DMRL synthase family. Homopentamer.

The enzyme catalyses (2S)-2-hydroxy-3-oxobutyl phosphate + 5-amino-6-(D-ribitylamino)uracil = 6,7-dimethyl-8-(1-D-ribityl)lumazine + phosphate + 2 H2O + H(+). Its pathway is cofactor biosynthesis; riboflavin biosynthesis; riboflavin from 2-hydroxy-3-oxobutyl phosphate and 5-amino-6-(D-ribitylamino)uracil: step 1/2. Catalyzes the formation of 6,7-dimethyl-8-ribityllumazine by condensation of 5-amino-6-(D-ribitylamino)uracil with 3,4-dihydroxy-2-butanone 4-phosphate. This is the penultimate step in the biosynthesis of riboflavin. This Mycobacterium tuberculosis (strain CDC 1551 / Oshkosh) protein is 6,7-dimethyl-8-ribityllumazine synthase (ribH).